The following is a 535-amino-acid chain: Bifunctional purine biosynthesis protein PurH (535 aa).

An MGS-like domain is found at 1–145 (MAQTALISVS…KNWKDVGVLT (145 aa)).

The protein belongs to the PurH family.

The catalysed reaction is (6R)-10-formyltetrahydrofolate + 5-amino-1-(5-phospho-beta-D-ribosyl)imidazole-4-carboxamide = 5-formamido-1-(5-phospho-D-ribosyl)imidazole-4-carboxamide + (6S)-5,6,7,8-tetrahydrofolate. It catalyses the reaction IMP + H2O = 5-formamido-1-(5-phospho-D-ribosyl)imidazole-4-carboxamide. It functions in the pathway purine metabolism; IMP biosynthesis via de novo pathway; 5-formamido-1-(5-phospho-D-ribosyl)imidazole-4-carboxamide from 5-amino-1-(5-phospho-D-ribosyl)imidazole-4-carboxamide (10-formyl THF route): step 1/1. Its pathway is purine metabolism; IMP biosynthesis via de novo pathway; IMP from 5-formamido-1-(5-phospho-D-ribosyl)imidazole-4-carboxamide: step 1/1. In Variovorax paradoxus (strain S110), this protein is Bifunctional purine biosynthesis protein PurH.